Here is a 965-residue protein sequence, read N- to C-terminus: Klaroid protein (965 aa).

A disordered region spans residues 1-20; sequence MSENTYQIETRRRSRSKTPF. The next 2 membrane-spanning stretches (helical) occupy residues 303-323 and 343-363; these read TIGG…GSVL and FLIF…LLLQ. A coiled-coil region spans residues 585–612; it reads SSDAEVQIERLNREIAFIKLALSDKQAE. The 163-residue stretch at 801-963 folds into the SUN domain; the sequence is GGQILSTRCT…YRFRVHGKPP (163 aa).

As to quaternary structure, core component of the LINC complex which is composed of inner nuclear membrane SUN domain-containing proteins coupled to outer nuclear membrane KASH domain-containing nesprins. As to expression, expressed in all cells in the eye disk.

It localises to the membrane. The protein localises to the cytoplasm. It is found in the cytoskeleton. Its subcellular location is the microtubule organizing center. The protein resides in the perinuclear region. Functionally, component of the LINC (LInker of Nucleoskeleton and Cytoskeleton) complex involved in the connection between the nuclear lamina and the cytoskeleton. Is required to nuclear migration in eye and to anchor klar in the nuclear membrane. The polypeptide is Klaroid protein (Drosophila melanogaster (Fruit fly)).